A 765-amino-acid chain; its full sequence is Periplasmic beta-glucosidase (765 aa).

The signal sequence occupies residues M1–A20. D287 is a catalytic residue.

It belongs to the glycosyl hydrolase 3 family.

The protein localises to the periplasm. The enzyme catalyses Hydrolysis of terminal, non-reducing beta-D-glucosyl residues with release of beta-D-glucose.. In Salmonella typhimurium (strain LT2 / SGSC1412 / ATCC 700720), this protein is Periplasmic beta-glucosidase (bglX).